A 302-amino-acid chain; its full sequence is EFTALSLLFSLLLLTASAEQCGKQAGGARCAAGLCCSNFGWCGNTNDYCGPGKCQSQCPSGPSPKPPTPGPGPSGGDIGSVISNSMFDQMLKHRNDNACQGKNNFYSYNAFINAARSFGGFGTTGDTTARKREIAAFFAQTSHETTGGWPTAPDGPYAWGYCFLREQGSPGDYCTPSGQWPCAPGRKYFGRGPIQISHNYNYGPCGRAIGVDLLNNPDLVATDPVISFKSAIWFWMTPQSPKPSCHDVIIGRWQPSAADRAANRLPGFGVITNIINGGLECGRGSDSRVQDRIGFYRRYCGI.

The first 18 residues, 1 to 18 (EFTALSLLFSLLLLTASA), serve as a signal peptide directing secretion. Residues 19 to 60 (EQCGKQAGGARCAAGLCCSNFGWCGNTNDYCGPGKCQSQCPS) form the Chitin-binding type-1 domain. Intrachain disulfides connect Cys-21–Cys-36, Cys-30–Cys-42, Cys-35–Cys-49, and Cys-54–Cys-58. Residues 59–79 (PSGPSPKPPTPGPGPSGGDIG) are disordered. Positions 61-72 (GPSPKPPTPGPG) are enriched in pro residues. Glu-144 acts as the Proton donor in catalysis. Cys-162 and Cys-182 form a disulfide bridge.

Belongs to the glycosyl hydrolase 19 family. Chitinase class I subfamily.

It is found in the vacuole. The enzyme catalyses Random endo-hydrolysis of N-acetyl-beta-D-glucosaminide (1-&gt;4)-beta-linkages in chitin and chitodextrins.. Its function is as follows. Defense against chitin-containing fungal pathogens. This is Endochitinase 4 (CHTB4) from Solanum tuberosum (Potato).